A 255-amino-acid polypeptide reads, in one-letter code: 5-oxoprolinase subunit A (255 aa).

This sequence belongs to the LamB/PxpA family. As to quaternary structure, forms a complex composed of PxpA, PxpB and PxpC.

It carries out the reaction 5-oxo-L-proline + ATP + 2 H2O = L-glutamate + ADP + phosphate + H(+). Catalyzes the cleavage of 5-oxoproline to form L-glutamate coupled to the hydrolysis of ATP to ADP and inorganic phosphate. This is 5-oxoprolinase subunit A from Corynebacterium efficiens (strain DSM 44549 / YS-314 / AJ 12310 / JCM 11189 / NBRC 100395).